We begin with the raw amino-acid sequence, 218 residues long: UPF0598 protein C8orf82 homolog (218 aa).

Belongs to the UPF0598 family.

The protein is UPF0598 protein C8orf82 homolog of Rattus norvegicus (Rat).